A 177-amino-acid polypeptide reads, in one-letter code: UPF0114 protein jhp_0175 (177 aa).

A run of 3 helical transmembrane segments spans residues 15-35 (WLLA…GYVF), 54-74 (LVLS…VLMV), and 145-165 (PIFW…LTAV).

The protein belongs to the UPF0114 family.

It is found in the cell membrane. This Helicobacter pylori (strain J99 / ATCC 700824) (Campylobacter pylori J99) protein is UPF0114 protein jhp_0175.